We begin with the raw amino-acid sequence, 533 residues long: uncharacterized protein (533 aa).

This is an uncharacterized protein from Clostridium beijerinckii (strain ATCC 51743 / NCIMB 8052) (Clostridium acetobutylicum).